The chain runs to 349 residues: Soluble TNF receptor II (349 aa).

An N-terminal signal peptide occupies residues Met1 to Gly19. 2 TNFR-Cys repeats span residues Lys31–Cys65 and Pro67–Cys108. Intrachain disulfides connect Cys32–Cys43, Cys44–Cys57, Cys47–Cys65, Cys68–Cys83, Cys86–Cys100, and Cys90–Cys108. Asn101, Asn190, Asn249, Asn277, and Asn313 each carry an N-linked (GlcNAc...) asparagine; by host glycan.

It belongs to the orthopoxvirus OPG002 family.

It is found in the secreted. In terms of biological role, inhibits host immune defense by binding to host TNF and various chemokines in the extracellular space. Binds host CC chemokines (beta chemokines) and CXC chemokines (alpha chemokines). This chain is Soluble TNF receptor II (OPG002), found in Monkeypox virus.